The following is a 700-amino-acid chain: Elongation factor G 1 (700 aa).

One can recognise a tr-type G domain in the interval 8–290 (ERYRNIGISA…AVIDYLPSPA (283 aa)). Residues 17 to 24 (AHIDAGKT), 88 to 92 (DTPGH), and 142 to 145 (NKMD) contribute to the GTP site.

This sequence belongs to the TRAFAC class translation factor GTPase superfamily. Classic translation factor GTPase family. EF-G/EF-2 subfamily.

It localises to the cytoplasm. Catalyzes the GTP-dependent ribosomal translocation step during translation elongation. During this step, the ribosome changes from the pre-translocational (PRE) to the post-translocational (POST) state as the newly formed A-site-bound peptidyl-tRNA and P-site-bound deacylated tRNA move to the P and E sites, respectively. Catalyzes the coordinated movement of the two tRNA molecules, the mRNA and conformational changes in the ribosome. The protein is Elongation factor G 1 of Bordetella parapertussis (strain 12822 / ATCC BAA-587 / NCTC 13253).